Consider the following 246-residue polypeptide: Probable transcriptional regulatory protein PM0980 (246 aa).

Belongs to the TACO1 family.

It is found in the cytoplasm. This is Probable transcriptional regulatory protein PM0980 from Pasteurella multocida (strain Pm70).